Here is a 620-residue protein sequence, read N- to C-terminus: 1-deoxy-D-xylulose-5-phosphate synthase (620 aa).

Residues histidine 80 and 121–123 (GHS) contribute to the thiamine diphosphate site. Aspartate 152 contacts Mg(2+). Thiamine diphosphate-binding positions include 153-154 (GA), asparagine 181, tyrosine 288, and glutamate 370. Asparagine 181 is a Mg(2+) binding site.

This sequence belongs to the transketolase family. DXPS subfamily. Homodimer. It depends on Mg(2+) as a cofactor. Thiamine diphosphate is required as a cofactor.

The enzyme catalyses D-glyceraldehyde 3-phosphate + pyruvate + H(+) = 1-deoxy-D-xylulose 5-phosphate + CO2. It participates in metabolic intermediate biosynthesis; 1-deoxy-D-xylulose 5-phosphate biosynthesis; 1-deoxy-D-xylulose 5-phosphate from D-glyceraldehyde 3-phosphate and pyruvate: step 1/1. In terms of biological role, catalyzes the acyloin condensation reaction between C atoms 2 and 3 of pyruvate and glyceraldehyde 3-phosphate to yield 1-deoxy-D-xylulose-5-phosphate (DXP). The protein is 1-deoxy-D-xylulose-5-phosphate synthase of Escherichia coli O7:K1 (strain IAI39 / ExPEC).